A 236-amino-acid chain; its full sequence is Elastase-1 (236 aa).

The Peptidase S1 domain occupies 1-236 (VVGGRVAQPN…AYISWMNGIM (236 aa)). A disulfide bond links Cys30 and Cys46. The active-site Charge relay system is His45. Ca(2+) is bound by residues Glu59, Asn61, Thr64, Glu66, and Glu69. The Charge relay system role is filled by Asp93. Disulfide bonds link Cys127–Cys193, Cys158–Cys174, and Cys183–Cys213. Ser187 functions as the Charge relay system in the catalytic mechanism.

The protein belongs to the peptidase S1 family. Elastase subfamily. Ca(2+) serves as cofactor. Pancreas.

The protein resides in the secreted. The catalysed reaction is Hydrolysis of proteins, including elastin. Preferential cleavage: Ala-|-Xaa.. Acts upon elastin. In Salmo salar (Atlantic salmon), this protein is Elastase-1.